The primary structure comprises 366 residues: MIKILADDRIPFVSELFGDFGELILKPGAHIQNRDLLAVNALLTRSITSVDSALLEGTAVEFVGSATAGFDHIDSTWLKKQSIHWAYAPGANATAVAEYVLHCVAYLHKKNLLPRKSATAAIIGVGHVGCVVSDRLRKIGFTVFHNDPPRAQLEKDFISVPLASLANVDLVCLHTPLVKTGNFPTYHLIDNRFLKMLKPGSVLLNAGRGAVIDNNALLQCDHVITCLDVWENESTVNLQLLEKTTIATPHIAGYSKQAKLRATLMIYDAFLKYFHLSDTRRFSELQQLQETMTLNIQDGRNAEDILLTLFDPGRESQRMREALAENPDQFEYLRRHFPLRNEFSAIQLTPTPSALLRKELDDWGFK.

Substrate contacts are provided by Ser46 and Thr67. Residues Asp147 and Thr175 each contribute to the NAD(+) site. Arg208 is an active-site residue. Residue Asp228 coordinates NAD(+). The active site involves Glu233. Catalysis depends on His250, which acts as the Proton donor. Gly253 contributes to the NAD(+) binding site. Tyr254 is a substrate binding site.

The protein belongs to the D-isomer specific 2-hydroxyacid dehydrogenase family. PdxB subfamily. In terms of assembly, homodimer.

The protein resides in the cytoplasm. The catalysed reaction is 4-phospho-D-erythronate + NAD(+) = (R)-3-hydroxy-2-oxo-4-phosphooxybutanoate + NADH + H(+). It functions in the pathway cofactor biosynthesis; pyridoxine 5'-phosphate biosynthesis; pyridoxine 5'-phosphate from D-erythrose 4-phosphate: step 2/5. Its function is as follows. Catalyzes the oxidation of erythronate-4-phosphate to 3-hydroxy-2-oxo-4-phosphonooxybutanoate. The chain is Erythronate-4-phosphate dehydrogenase from Coxiella burnetii (strain Dugway 5J108-111).